We begin with the raw amino-acid sequence, 85 residues long: Conotoxin Mi15a (85 aa).

Residues 1 to 23 (MEKLTVLILVATVLLTIQVLGQS) form the signal peptide. Residues 24–49 (DRDKHLKRRPKQYATKRLSARMRGHR) constitute a propeptide that is removed on maturation. Residue Gln50 is modified to Pyrrolidone carboxylic acid.

This sequence belongs to the conotoxin O2 superfamily. Contains 4 disulfide bonds. As to expression, expressed by the venom duct.

It is found in the secreted. This Conus miles (Soldier cone) protein is Conotoxin Mi15a.